Reading from the N-terminus, the 121-residue chain is Prefoldin subunit beta (121 aa).

This sequence belongs to the prefoldin subunit beta family. Heterohexamer of two alpha and four beta subunits.

It is found in the cytoplasm. Functionally, molecular chaperone capable of stabilizing a range of proteins. Seems to fulfill an ATP-independent, HSP70-like function in archaeal de novo protein folding. The polypeptide is Prefoldin subunit beta (pfdB) (Methanothermobacter thermautotrophicus (strain ATCC 29096 / DSM 1053 / JCM 10044 / NBRC 100330 / Delta H) (Methanobacterium thermoautotrophicum)).